The following is a 254-amino-acid chain: Dihydroorotate dehydrogenase B (NAD(+)), electron transfer subunit (254 aa).

In terms of domain architecture, FAD-binding FR-type spans 1–99 (MLQTEMKVIQ…LGPLGKGFDI (99 aa)). Residues 50 to 53 (RPIS), 67 to 69 (LYR), and 74 to 75 (GT) each bind FAD. C218, C223, C226, and C241 together coordinate [2Fe-2S] cluster.

It belongs to the PyrK family. In terms of assembly, heterotetramer of 2 PyrK and 2 PyrD type B subunits. [2Fe-2S] cluster serves as cofactor. It depends on FAD as a cofactor.

The protein operates within pyrimidine metabolism; UMP biosynthesis via de novo pathway; orotate from (S)-dihydroorotate (NAD(+) route): step 1/1. Responsible for channeling the electrons from the oxidation of dihydroorotate from the FMN redox center in the PyrD type B subunit to the ultimate electron acceptor NAD(+). The protein is Dihydroorotate dehydrogenase B (NAD(+)), electron transfer subunit of Listeria monocytogenes serotype 4b (strain F2365).